The following is a 157-amino-acid chain: MISQATIFMLVLLVIALLAKNQSLLIAVLVLLVIKFIGVGDKVFPFFQQKGISLGVTIITIAVLTPIATGEIGFKQMGEAIRSSYAWVALLSGVVVALIAASGIDLLKNDPHITTALVLGTILAVAVFNGVAVGPLIGAGIAYLTMKVVQWLGSFWG.

4 helical membrane-spanning segments follow: residues 1 to 21 (MISQATIFMLVLLVIALLAKN), 54 to 74 (LGVTIITIAVLTPIATGEIGF), 87 to 107 (WVALLSGVVVALIAASGIDLL), and 117 to 137 (LVLGTILAVAVFNGVAVGPLI).

This sequence belongs to the UPF0756 family.

It localises to the cell membrane. The sequence is that of UPF0756 membrane protein BH3161 from Halalkalibacterium halodurans (strain ATCC BAA-125 / DSM 18197 / FERM 7344 / JCM 9153 / C-125) (Bacillus halodurans).